The primary structure comprises 1044 residues: Isoleucine--tRNA ligase (1044 aa).

Positions 49-59 (PYCSGRIHLGT) match the 'HIGH' region motif. Residues 591–595 (KMSKS) carry the 'KMSKS' region motif. K594 is an ATP binding site.

It belongs to the class-I aminoacyl-tRNA synthetase family. IleS type 2 subfamily. In terms of assembly, monomer. Zn(2+) is required as a cofactor.

The protein localises to the cytoplasm. It catalyses the reaction tRNA(Ile) + L-isoleucine + ATP = L-isoleucyl-tRNA(Ile) + AMP + diphosphate. Its function is as follows. Catalyzes the attachment of isoleucine to tRNA(Ile). As IleRS can inadvertently accommodate and process structurally similar amino acids such as valine, to avoid such errors it has two additional distinct tRNA(Ile)-dependent editing activities. One activity is designated as 'pretransfer' editing and involves the hydrolysis of activated Val-AMP. The other activity is designated 'posttransfer' editing and involves deacylation of mischarged Val-tRNA(Ile). The protein is Isoleucine--tRNA ligase of Methanothermobacter thermautotrophicus (strain ATCC 29096 / DSM 1053 / JCM 10044 / NBRC 100330 / Delta H) (Methanobacterium thermoautotrophicum).